Consider the following 150-residue polypeptide: MTNSFQNSRRDLRERAFQALFNIETGAELLAASQFAYGYDKVTGEDAQVLELPIFLLSLVTGVNNHKEELDNLISTHLKKGWSLERLTLTDKTLLRLGLFEIKYFDETPDRVALNEIIEVAKKYSDETSAKFINGLLSQYVSEAPSANKS.

The protein belongs to the NusB family.

Involved in transcription antitermination. Required for transcription of ribosomal RNA (rRNA) genes. Binds specifically to the boxA antiterminator sequence of the ribosomal RNA (rrn) operons. The chain is Transcription antitermination protein NusB from Streptococcus pyogenes serotype M6 (strain ATCC BAA-946 / MGAS10394).